The chain runs to 146 residues: Large ribosomal subunit protein uL15 (146 aa).

The segment covering 1–13 has biased composition (basic and acidic residues); it reads MKLHELKPAEGSR. The interval 1–52 is disordered; the sequence is MKLHELKPAEGSRKVRNRVGRGIGSGNGKTAGKGHKGQNARSGGGVRLGFEG. 2 stretches are compositionally biased toward gly residues: residues 21 to 31 and 42 to 52; these read RGIGSGNGKTA and SGGGVRLGFEG.

This sequence belongs to the universal ribosomal protein uL15 family. Part of the 50S ribosomal subunit.

In terms of biological role, binds to the 23S rRNA. In Bacillus cereus (strain B4264), this protein is Large ribosomal subunit protein uL15.